Here is a 362-residue protein sequence, read N- to C-terminus: Probable dual-specificity RNA methyltransferase RlmN (362 aa).

Glutamate 105 functions as the Proton acceptor in the catalytic mechanism. Residues 111–344 (HEYGNSICVT…VTIRREQGHD (234 aa)) form the Radical SAM core domain. Cysteine 118 and cysteine 349 are disulfide-bonded. Cysteine 125, cysteine 129, and cysteine 132 together coordinate [4Fe-4S] cluster. S-adenosyl-L-methionine is bound by residues 175 to 176 (GE), serine 207, 230 to 232 (SLH), and asparagine 306. Residue cysteine 349 is the S-methylcysteine intermediate of the active site.

It belongs to the radical SAM superfamily. RlmN family. Requires [4Fe-4S] cluster as cofactor.

The protein resides in the cytoplasm. It carries out the reaction adenosine(2503) in 23S rRNA + 2 reduced [2Fe-2S]-[ferredoxin] + 2 S-adenosyl-L-methionine = 2-methyladenosine(2503) in 23S rRNA + 5'-deoxyadenosine + L-methionine + 2 oxidized [2Fe-2S]-[ferredoxin] + S-adenosyl-L-homocysteine. The catalysed reaction is adenosine(37) in tRNA + 2 reduced [2Fe-2S]-[ferredoxin] + 2 S-adenosyl-L-methionine = 2-methyladenosine(37) in tRNA + 5'-deoxyadenosine + L-methionine + 2 oxidized [2Fe-2S]-[ferredoxin] + S-adenosyl-L-homocysteine. Its function is as follows. Specifically methylates position 2 of adenine 2503 in 23S rRNA and position 2 of adenine 37 in tRNAs. This chain is Probable dual-specificity RNA methyltransferase RlmN, found in Bacillus cytotoxicus (strain DSM 22905 / CIP 110041 / 391-98 / NVH 391-98).